Reading from the N-terminus, the 257-residue chain is Imidazole glycerol phosphate synthase subunit HisF (257 aa).

Residues D11 and D130 contribute to the active site.

Belongs to the HisA/HisF family. As to quaternary structure, heterodimer of HisH and HisF.

It localises to the cytoplasm. The catalysed reaction is 5-[(5-phospho-1-deoxy-D-ribulos-1-ylimino)methylamino]-1-(5-phospho-beta-D-ribosyl)imidazole-4-carboxamide + L-glutamine = D-erythro-1-(imidazol-4-yl)glycerol 3-phosphate + 5-amino-1-(5-phospho-beta-D-ribosyl)imidazole-4-carboxamide + L-glutamate + H(+). It participates in amino-acid biosynthesis; L-histidine biosynthesis; L-histidine from 5-phospho-alpha-D-ribose 1-diphosphate: step 5/9. IGPS catalyzes the conversion of PRFAR and glutamine to IGP, AICAR and glutamate. The HisF subunit catalyzes the cyclization activity that produces IGP and AICAR from PRFAR using the ammonia provided by the HisH subunit. This chain is Imidazole glycerol phosphate synthase subunit HisF, found in Aliivibrio salmonicida (strain LFI1238) (Vibrio salmonicida (strain LFI1238)).